We begin with the raw amino-acid sequence, 366 residues long: Cyanide hydratase (366 aa).

The CN hydrolase domain occupies 6–285; sequence YKAAAVTSEP…DGLMFVDIDL (280 aa). Catalysis depends on glutamate 46, which acts as the Proton acceptor. Lysine 128 is an active-site residue. The active-site Nucleophile is the cysteine 163.

The protein belongs to the carbon-nitrogen hydrolase superfamily. Nitrilase family. In terms of assembly, oligomer of dimers, forming left-handed helical fibers.

The catalysed reaction is formamide = hydrogen cyanide + H2O. Catalyzes the hydration of cyanide to formamide. Degradation of cyanide may be important for plant pathogenic fungi in infection of cyanogenic plants. Can also transform some nitriles like 2-cyanopyridine and fumaronitrile. In Pyrenophora teres f. teres (strain 0-1) (Barley net blotch fungus), this protein is Cyanide hydratase.